The primary structure comprises 277 residues: Orotidine 5'-phosphate decarboxylase (277 aa).

Residues Asp-40, 62 to 64, 93 to 102, Tyr-229, and Arg-247 contribute to the substrate site; these read KTH and DRKFIDIGNT. The active-site Proton donor is the Lys-95.

Belongs to the OMP decarboxylase family.

It carries out the reaction orotidine 5'-phosphate + H(+) = UMP + CO2. The protein operates within pyrimidine metabolism; UMP biosynthesis via de novo pathway; UMP from orotate: step 2/2. The polypeptide is Orotidine 5'-phosphate decarboxylase (pyrG) (Aspergillus kawachii (White koji mold)).